Reading from the N-terminus, the 401-residue chain is Argininosuccinate synthase (401 aa).

ATP contacts are provided by residues 10–18 and Ala-37; that span reads AYSGGLDTS. Tyr-89 is a binding site for L-citrulline. Gly-119 serves as a coordination point for ATP. The L-aspartate site is built by Thr-121, Asn-125, and Asp-126. L-citrulline is bound at residue Asn-125. The L-citrulline site is built by Arg-129, Ser-178, Ser-187, Glu-263, and Tyr-275.

Belongs to the argininosuccinate synthase family. Type 1 subfamily. Homotetramer.

Its subcellular location is the cytoplasm. It catalyses the reaction L-citrulline + L-aspartate + ATP = 2-(N(omega)-L-arginino)succinate + AMP + diphosphate + H(+). The protein operates within amino-acid biosynthesis; L-arginine biosynthesis; L-arginine from L-ornithine and carbamoyl phosphate: step 2/3. This Buchnera aphidicola subsp. Schizaphis graminum (strain Sg) protein is Argininosuccinate synthase.